We begin with the raw amino-acid sequence, 71 residues long: Large ribosomal subunit protein bL31 (71 aa).

4 residues coordinate Zn(2+): Cys16, Cys18, Cys37, and Cys40.

This sequence belongs to the bacterial ribosomal protein bL31 family. Type A subfamily. As to quaternary structure, part of the 50S ribosomal subunit. Requires Zn(2+) as cofactor.

In terms of biological role, binds the 23S rRNA. This Marinomonas sp. (strain MWYL1) protein is Large ribosomal subunit protein bL31.